A 94-amino-acid polypeptide reads, in one-letter code: MGRSLKKGPYCDPKLLKKIEKLNQNNEKKVIKTWSRRSTILPQMVGHTIAVYDGRKHVPVYITEEMVGHKLGEFAPTRTFKGHGHHTERSTALK.

Belongs to the universal ribosomal protein uS19 family.

Functionally, protein S19 forms a complex with S13 that binds strongly to the 16S ribosomal RNA. The protein is Small ribosomal subunit protein uS19 of Caldicellulosiruptor saccharolyticus (strain ATCC 43494 / DSM 8903 / Tp8T 6331).